The primary structure comprises 311 residues: Ribonuclease HIII (311 aa).

Residues 95-311 form the RNase H type-2 domain; the sequence is MSIVGSDEVG…NTEKAFRLLK (217 aa). A divalent metal cation contacts are provided by D101, E102, and D206.

The protein belongs to the RNase HII family. RnhC subfamily. Mn(2+) serves as cofactor. It depends on Mg(2+) as a cofactor.

Its subcellular location is the cytoplasm. It carries out the reaction Endonucleolytic cleavage to 5'-phosphomonoester.. Endonuclease that specifically degrades the RNA of RNA-DNA hybrids. In Bacillus cereus (strain ZK / E33L), this protein is Ribonuclease HIII.